Reading from the N-terminus, the 186-residue chain is Mitochondrial import inner membrane translocase subunit Tim22 (186 aa).

Cystine bridges form between Cys61/Cys133 and Cys152/Cys171. 3 helical membrane-spanning segments follow: residues 66-86, 117-135, and 162-182; these read ALAC…TAGI, YAKN…ECLV, and AGLK…AVID.

The protein belongs to the Tim17/Tim22/Tim23 family. In terms of assembly, core component of the TIM22 complex.

Its subcellular location is the mitochondrion inner membrane. Its function is as follows. Essential core component of the TIM22 complex, a complex that mediates the import and insertion of multi-pass transmembrane proteins into the mitochondrial inner membrane. In the TIM22 complex, it constitutes the voltage-activated and signal-gated channel. Forms a twin-pore translocase that uses the membrane potential as external driving force in 2 voltage-dependent steps. This is Mitochondrial import inner membrane translocase subunit Tim22 (timm22) from Xenopus tropicalis (Western clawed frog).